The following is a 102-amino-acid chain: MKIPILPVVALLSLLALHAVQGAALGHPTIYPEDSSYNNYPTATEGLNNEFLNFKRLQSAFQSENFLNWHVITDMFKNAFPFINWDFFPKVKGLRSAAPDSQ.

An N-terminal signal peptide occupies residues 1-22; sequence MKIPILPVVALLSLLALHAVQG.

As to expression, expression restricted to suprabasal keratinocytes of the epidermis.

It localises to the secreted. Functionally, may act as a soluble regulator of keratinocyte differentiation. May play an important role in embryonic skin morphogenesis. In Mus musculus (Mouse), this protein is Keratinocyte differentiation-associated protein.